Here is a 394-residue protein sequence, read N- to C-terminus: Choline/ethanolamine kinase (394 aa).

A disordered region spans residues 1–42 (MAADGTGVVGGGAVGGGLPKDGLQDAKCPEPIPNRRRASSLS). Alanine 2 carries the post-translational modification N-acetylalanine. Over residues 7 to 19 (GVVGGGAVGGGLP) the composition is skewed to gly residues. ATP contacts are provided by residues 75 to 81 (SGGLSNL), arginine 104, 146 to 152 (QYLPSRP), glutamine 244, and aspartate 264. Residue 77-79 (GLS) coordinates substrate.

Belongs to the choline/ethanolamine kinase family. In terms of assembly, homodimer, and heterodimer with CHKA. In terms of tissue distribution, expressed ubiquitously with the highest level in testis.

It carries out the reaction choline + ATP = phosphocholine + ADP + H(+). The catalysed reaction is ethanolamine + ATP = phosphoethanolamine + ADP + H(+). Its pathway is phospholipid metabolism; phosphatidylethanolamine biosynthesis; phosphatidylethanolamine from ethanolamine: step 1/3. Its function is as follows. Has a key role in phospholipid metabolism, and catalyzes the first step of phosphatidylethanolamine and phosphatidylcholine biosynthesis. The chain is Choline/ethanolamine kinase (Chkb) from Mus musculus (Mouse).